The following is a 185-amino-acid chain: Peptidyl-tRNA hydrolase (185 aa).

Residue Y14 participates in tRNA binding. H19 (proton acceptor) is an active-site residue. TRNA-binding residues include Y65, N67, and N113.

This sequence belongs to the PTH family. In terms of assembly, monomer.

The protein localises to the cytoplasm. It catalyses the reaction an N-acyl-L-alpha-aminoacyl-tRNA + H2O = an N-acyl-L-amino acid + a tRNA + H(+). Functionally, hydrolyzes ribosome-free peptidyl-tRNAs (with 1 or more amino acids incorporated), which drop off the ribosome during protein synthesis, or as a result of ribosome stalling. In terms of biological role, catalyzes the release of premature peptidyl moieties from peptidyl-tRNA molecules trapped in stalled 50S ribosomal subunits, and thus maintains levels of free tRNAs and 50S ribosomes. The sequence is that of Peptidyl-tRNA hydrolase from Rickettsia typhi (strain ATCC VR-144 / Wilmington).